A 419-amino-acid chain; its full sequence is Ribosomal RNA large subunit methyltransferase G (419 aa).

Positions 386–408 (KAEPFETHPTEAEAKVEVTESKP) are enriched in basic and acidic residues. The interval 386–419 (KAEPFETHPTEAEAKVEVTESKPHPQSSLYGTKK) is disordered. Residues 409 to 419 (HPQSSLYGTKK) show a composition bias toward polar residues.

The protein belongs to the methyltransferase superfamily. RlmG family.

The protein resides in the cytoplasm. The catalysed reaction is guanosine(1835) in 23S rRNA + S-adenosyl-L-methionine = N(2)-methylguanosine(1835) in 23S rRNA + S-adenosyl-L-homocysteine + H(+). In terms of biological role, specifically methylates the guanine in position 1835 (m2G1835) of 23S rRNA. In Shewanella woodyi (strain ATCC 51908 / MS32), this protein is Ribosomal RNA large subunit methyltransferase G.